Here is an 85-residue protein sequence, read N- to C-terminus: U4-theraphotoxin-Hhn1a (85 aa).

The first 22 residues, 1–22 (MKMTLIAILTCAAVLVLHTTAA), serve as a signal peptide directing secretion. The propeptide occupies 23 to 48 (EELEAESQLMEVGMPDTELAAVDEER). 3 disulfides stabilise this stretch: cysteine 52/cysteine 66, cysteine 56/cysteine 77, and cysteine 71/cysteine 82.

It belongs to the neurotoxin 12 (Hwtx-2) family. 02 (Hwtx-2) subfamily. As to quaternary structure, monomer. In terms of tissue distribution, expressed by the venom gland.

Its subcellular location is the secreted. Neurotoxin active on both insects and mammals. This Cyriopagopus hainanus (Chinese bird spider) protein is U4-theraphotoxin-Hhn1a.